The following is a 513-amino-acid chain: MGLQFLAPGEKVFPSLHRIIISTFALIAAYIFIVRPLRNILFHPLKKYPGPKLFGASSIPYGFYYMTGKWHLKIRNLHATYGPIVRIGPDELSYACPEAWEDIYGRYVPTKRRENPKPVWYCSPDAHDMVGASLGDHGRMRRVMAPGFTYSAMCKQEPLIKGHVDMFLSKLCSLCGDGRAEVNILDWLTYCTFDLIGDLSFGEPFGCMENNMLHPWLQLVFANIYITHIILLCQRIPFFYLFLPIKTTYQLWRDFRRHVVLLREVVERRLSLSTPRDDFLDVMTTKQTSTLYMTKEEIFKNAILLTGGGAETTSSSLSGMMYMLTMRPDVKEKILEELRDTFPSEDDINMRSVAQLTYTGAFIEESMRYYPPGPNTMWRITPPAGNTILGDYIPGNTIVGIPHRVLYRSEAYWKDADGFRPERWLPDSQRPAEFDEDKREGFHPFSYGPRACIAMNLAYAEMRYILARFLWHFDIEATKESKKWMDDQKAYLVWDKPGLFVHLKPRAGVKVAA.

A run of 2 helical transmembrane segments spans residues 13–33 (FPSL…YIFI) and 212–232 (MLHP…IILL). Cys-452 is a heme binding site.

Belongs to the cytochrome P450 family. It depends on heme as a cofactor.

The protein localises to the membrane. It carries out the reaction dehydroprobetaenone I + NADPH + O2 + H(+) = epoxybetaenone + NADP(+) + H2O. The catalysed reaction is dehydroprobetaenone I + 3 NADPH + 3 O2 + 3 H(+) = betaenone C + 3 NADP(+) + 3 H2O. The enzyme catalyses probetaenone I + 3 NADPH + 3 O2 + 3 H(+) = betaenone B + 3 NADP(+) + 3 H2O. It participates in mycotoxin biosynthesis. Cytochrome P450 monooxygenase; part of the gene cluster that mediates the biosynthesis of the phytotoxin stemphyloxin II. The first step of the pathway is the synthesis of dehydroprobetaenone I by the polyketide synthase sthA and the enoyl reductase sthE via condensation of one acetyl-CoA starter unit with 7 malonyl-CoA units and 5 methylations. The C-terminal reductase (R) domain of sthA catalyzes the reductive release of the polyketide chain. Because sthA lacks a designated enoylreductase (ER) domain, the required activity is provided the enoyl reductase sthE. The short-chain dehydrogenase/reductase sthC then catalyzes reduction of dehydroprobetaenone I to probetaenone I. The cytochrome P450 monooxygenase sthF catalyzes successive epoxidation, oxidation (resulting from epoxide opening) and hydroxylation to install a tertiary alcohol in the decaline ring to yield betaenone C from dehydroprobetaenone I and betaenone B from probetaenone I. The FAD-linked oxidoreductase sthB is responsible for the conversion of betaenone C to betaenone A via an intramolecular aldol reaction between C-1 and C-17 to form the bridged tricyclic system in betaenone A. Finally, the cytochrome P450 monooxygenase sthD catalyzes the hydroxylation of C-15 to afford the final metabolite stemphyloxin II. This chain is Cytochrome P450 monooxygenase sthF, found in Phaeosphaeria nodorum (strain SN15 / ATCC MYA-4574 / FGSC 10173) (Glume blotch fungus).